Reading from the N-terminus, the 501-residue chain is Phenylalanine--tRNA ligase alpha subunit (501 aa).

2 residues coordinate L-phenylalanine: Thr-340 and Phe-423. Glu-425 is a Mg(2+) binding site. L-phenylalanine is bound at residue Phe-448.

This sequence belongs to the class-II aminoacyl-tRNA synthetase family. Phe-tRNA synthetase alpha subunit type 2 subfamily. In terms of assembly, tetramer of two alpha and two beta subunits. It depends on Mg(2+) as a cofactor.

Its subcellular location is the cytoplasm. The enzyme catalyses tRNA(Phe) + L-phenylalanine + ATP = L-phenylalanyl-tRNA(Phe) + AMP + diphosphate + H(+). The protein is Phenylalanine--tRNA ligase alpha subunit of Methanococcus maripaludis (strain C5 / ATCC BAA-1333).